Consider the following 394-residue polypeptide: Formate-dependent phosphoribosylglycinamide formyltransferase (394 aa).

N(1)-(5-phospho-beta-D-ribosyl)glycinamide-binding positions include 21-22 and Glu-81; that span reads EL. ATP contacts are provided by residues Arg-113, Lys-154, 159-164, 194-197, and Glu-202; these read SSGKGQ and EEFI. The 190-residue stretch at 118–307 folds into the ATP-grasp domain; it reads RLAAEELGLP…QFELHVRAIL (190 aa). Mg(2+)-binding residues include Glu-266 and Glu-278. N(1)-(5-phospho-beta-D-ribosyl)glycinamide-binding positions include Asp-285, Lys-355, and 362–363; that span reads RR.

This sequence belongs to the PurK/PurT family. Homodimer.

The catalysed reaction is N(1)-(5-phospho-beta-D-ribosyl)glycinamide + formate + ATP = N(2)-formyl-N(1)-(5-phospho-beta-D-ribosyl)glycinamide + ADP + phosphate + H(+). The protein operates within purine metabolism; IMP biosynthesis via de novo pathway; N(2)-formyl-N(1)-(5-phospho-D-ribosyl)glycinamide from N(1)-(5-phospho-D-ribosyl)glycinamide (formate route): step 1/1. Its function is as follows. Involved in the de novo purine biosynthesis. Catalyzes the transfer of formate to 5-phospho-ribosyl-glycinamide (GAR), producing 5-phospho-ribosyl-N-formylglycinamide (FGAR). Formate is provided by PurU via hydrolysis of 10-formyl-tetrahydrofolate. The protein is Formate-dependent phosphoribosylglycinamide formyltransferase of Pelobacter propionicus (strain DSM 2379 / NBRC 103807 / OttBd1).